A 908-amino-acid chain; its full sequence is Putative cell signaling protein HAM1 (908 aa).

Disordered stretches follow at residues 1 to 24 (MSVA…SAVS) and 177 to 359 (TKAA…EHRQ). Composition is skewed to basic and acidic residues over residues 179–192 (AADK…KLDS), 231–247 (HPRD…DKGK), 261–283 (AKSD…KETG), 306–321 (EQKE…KRDA), and 338–359 (NQEK…EHRQ). Residues 255 to 282 (YNQAQEAKSDAQSKAQDLKSSARDYKET) adopt a coiled-coil conformation.

In terms of processing, palmitoylated.

Functionally, may act as a negative regulator of mating during vegetative growth. This is Putative cell signaling protein HAM1 from Cryptococcus neoformans var. grubii serotype A (strain H99 / ATCC 208821 / CBS 10515 / FGSC 9487) (Filobasidiella neoformans var. grubii).